The following is a 2359-amino-acid chain: Pre-mRNA-processing-splicing factor 8A (2359 aa).

Positions 1-54 are disordered; the sequence is MWNNNDGMPLAPPGTGGSMMPPPPAAHPSYTALPPPSNPTPPVEPTPEEAEAKL. The span at 33 to 45 shows a compositional bias: pro residues; the sequence is LPPPSNPTPPVEP. The region spanning 2127 to 2258 is the MPN domain; it reads TYIMPKNILK…LTSYKLTQTG (132 aa).

As to quaternary structure, interacts with CLO.

Its subcellular location is the nucleus. Its function is as follows. Functions as a scaffold that mediates the ordered assembly of spliceosomal proteins and snRNAs. Required for the assembly of the U4/U6-U5 tri-snRNP complex. Required for embryo development. Required for splicing efficiency of COOLAIR introns and usage of the proximal poly(A) site. COOLAIR is a set of long non-coding antisense transcripts produced at the FLOWERING LOCUS C (FLC). COOLAIR initiates just downstream of the major sense transcript poly(A) site and terminates either early or extends into the FLC promoter region. Splicing of COOLAIR by PRP8A is functionally important for FLC regulation. The polypeptide is Pre-mRNA-processing-splicing factor 8A (Arabidopsis thaliana (Mouse-ear cress)).